The following is a 545-amino-acid chain: Glucose-6-phosphate isomerase (545 aa).

Glu351 (proton donor) is an active-site residue. Catalysis depends on residues His382 and Lys510.

It belongs to the GPI family.

It is found in the cytoplasm. It catalyses the reaction alpha-D-glucose 6-phosphate = beta-D-fructose 6-phosphate. It participates in carbohydrate biosynthesis; gluconeogenesis. The protein operates within carbohydrate degradation; glycolysis; D-glyceraldehyde 3-phosphate and glycerone phosphate from D-glucose: step 2/4. In terms of biological role, catalyzes the reversible isomerization of glucose-6-phosphate to fructose-6-phosphate. In Shewanella sp. (strain ANA-3), this protein is Glucose-6-phosphate isomerase.